Reading from the N-terminus, the 477-residue chain is Aspartyl/glutamyl-tRNA(Asn/Gln) amidotransferase subunit B (477 aa).

Belongs to the GatB/GatE family. GatB subfamily. As to quaternary structure, heterotrimer of A, B and C subunits.

The catalysed reaction is L-glutamyl-tRNA(Gln) + L-glutamine + ATP + H2O = L-glutaminyl-tRNA(Gln) + L-glutamate + ADP + phosphate + H(+). It carries out the reaction L-aspartyl-tRNA(Asn) + L-glutamine + ATP + H2O = L-asparaginyl-tRNA(Asn) + L-glutamate + ADP + phosphate + 2 H(+). Functionally, allows the formation of correctly charged Asn-tRNA(Asn) or Gln-tRNA(Gln) through the transamidation of misacylated Asp-tRNA(Asn) or Glu-tRNA(Gln) in organisms which lack either or both of asparaginyl-tRNA or glutaminyl-tRNA synthetases. The reaction takes place in the presence of glutamine and ATP through an activated phospho-Asp-tRNA(Asn) or phospho-Glu-tRNA(Gln). The chain is Aspartyl/glutamyl-tRNA(Asn/Gln) amidotransferase subunit B from Methylobacillus flagellatus (strain ATCC 51484 / DSM 6875 / VKM B-1610 / KT).